The sequence spans 314 residues: DNA-directed RNA polymerase subunit alpha (314 aa).

Residues 1-228 (MIEIEKPRIE…EHLNIFVDLT (228 aa)) form an alpha N-terminal domain (alpha-NTD) region. The alpha C-terminal domain (alpha-CTD) stretch occupies residues 245 to 314 (KEKVLEMSIE…DLGLGLRKED (70 aa)).

This sequence belongs to the RNA polymerase alpha chain family. As to quaternary structure, homodimer. The RNAP catalytic core consists of 2 alpha, 1 beta, 1 beta' and 1 omega subunit. When a sigma factor is associated with the core the holoenzyme is formed, which can initiate transcription.

The catalysed reaction is RNA(n) + a ribonucleoside 5'-triphosphate = RNA(n+1) + diphosphate. DNA-dependent RNA polymerase catalyzes the transcription of DNA into RNA using the four ribonucleoside triphosphates as substrates. The chain is DNA-directed RNA polymerase subunit alpha from Macrococcus caseolyticus (strain JCSC5402) (Macrococcoides caseolyticum).